The primary structure comprises 316 residues: Ribosomal protein L11 methyltransferase (316 aa).

Residues threonine 157, glycine 178, aspartate 200, and asparagine 243 each contribute to the S-adenosyl-L-methionine site.

It belongs to the methyltransferase superfamily. PrmA family.

Its subcellular location is the cytoplasm. It carries out the reaction L-lysyl-[protein] + 3 S-adenosyl-L-methionine = N(6),N(6),N(6)-trimethyl-L-lysyl-[protein] + 3 S-adenosyl-L-homocysteine + 3 H(+). In terms of biological role, methylates ribosomal protein L11. This is Ribosomal protein L11 methyltransferase from Streptococcus pneumoniae (strain P1031).